The sequence spans 403 residues: Acetate kinase (403 aa).

N8 serves as a coordination point for Mg(2+). K15 serves as a coordination point for ATP. R90 contributes to the substrate binding site. The active-site Proton donor/acceptor is D147. ATP contacts are provided by residues 207-211 (HLGSG), 282-284 (DLR), and 330-334 (GVGEN). Position 384 (E384) interacts with Mg(2+).

The protein belongs to the acetokinase family. In terms of assembly, homodimer. Mg(2+) serves as cofactor. The cofactor is Mn(2+).

It localises to the cytoplasm. The catalysed reaction is acetate + ATP = acetyl phosphate + ADP. Its pathway is metabolic intermediate biosynthesis; acetyl-CoA biosynthesis; acetyl-CoA from acetate: step 1/2. In terms of biological role, catalyzes the formation of acetyl phosphate from acetate and ATP. Can also catalyze the reverse reaction. The polypeptide is Acetate kinase (Exiguobacterium sibiricum (strain DSM 17290 / CCUG 55495 / CIP 109462 / JCM 13490 / 255-15)).